Here is a 194-residue protein sequence, read N- to C-terminus: Troponin I 4 (194 aa).

The interval 1 to 27 (MSDVDADEARKMAERERKKEEVRKRLE) is disordered. A compositionally biased stretch (basic and acidic residues) spans 7–27 (DEARKMAERERKKEEVRKRLE).

The protein belongs to the troponin I family. As to expression, expression is detected only in pharyngeal muscle cells from embryos to adults.

Troponin I is the inhibitory subunit of troponin, the thin filament regulatory complex which confers calcium-sensitivity to muscle actomyosin ATPase activity. This is Troponin I 4 (tni-4) from Caenorhabditis elegans.